The primary structure comprises 190 residues: Ribonuclease HII (190 aa).

Residues 3–190 (KLIAGVDEVG…KPVKALLEEK (188 aa)) enclose the RNase H type-2 domain. A divalent metal cation-binding residues include Asp9, Glu10, and Asp101.

This sequence belongs to the RNase HII family. Requires Mn(2+) as cofactor. The cofactor is Mg(2+).

The protein localises to the cytoplasm. It carries out the reaction Endonucleolytic cleavage to 5'-phosphomonoester.. Functionally, endonuclease that specifically degrades the RNA of RNA-DNA hybrids. This is Ribonuclease HII from Alteromonas mediterranea (strain DSM 17117 / CIP 110805 / LMG 28347 / Deep ecotype).